Here is a 317-residue protein sequence, read N- to C-terminus: Secreted mono- and diacylglycerol lipase 3 (317 aa).

The first 29 residues, 1–29, serve as a signal peptide directing secretion; sequence MMFADDLVRMAVLRFITVALAAITNVANA. Cys61 and Cys310 are oxidised to a cystine. Asn108 carries N-linked (GlcNAc...) asparagine glycosylation. Ser175 functions as the Nucleophile in the catalytic mechanism. A glycan (N-linked (GlcNAc...) asparagine) is linked at Asn194. Residue Asp234 is part of the active site. N-linked (GlcNAc...) asparagine glycosylation occurs at Asn258. His294 is an active-site residue.

It belongs to the AB hydrolase superfamily. Lipase family. Class 3 subfamily.

It localises to the secreted. The catalysed reaction is a monoacylglycerol + H2O = glycerol + a fatty acid + H(+). It carries out the reaction a diacylglycerol + H2O = a monoacylglycerol + a fatty acid + H(+). In terms of biological role, secreted mono- and diacylglycerol lipase involved in plant virulence. Has a substrate preference for p-nitrophenyl esters with a carbon chain length of C10 (p-nitrophenyl caprate). In Gibberella zeae (strain ATCC MYA-4620 / CBS 123657 / FGSC 9075 / NRRL 31084 / PH-1) (Wheat head blight fungus), this protein is Secreted mono- and diacylglycerol lipase 3.